Consider the following 189-residue polypeptide: Potassium-transporting ATPase KdpC subunit (189 aa).

The chain crosses the membrane as a helical span at residues 6-26 (PAILMLIIFTILCGGIYPAVV).

This sequence belongs to the KdpC family. The system is composed of three essential subunits: KdpA, KdpB and KdpC.

Its subcellular location is the cell inner membrane. Part of the high-affinity ATP-driven potassium transport (or Kdp) system, which catalyzes the hydrolysis of ATP coupled with the electrogenic transport of potassium into the cytoplasm. This subunit acts as a catalytic chaperone that increases the ATP-binding affinity of the ATP-hydrolyzing subunit KdpB by the formation of a transient KdpB/KdpC/ATP ternary complex. This chain is Potassium-transporting ATPase KdpC subunit, found in Geobacter sulfurreducens (strain ATCC 51573 / DSM 12127 / PCA).